The primary structure comprises 190 residues: MTSSIHELSDNIGSHEKQEQRDSHFQPPIPSARNYESIVTSLVYSDPGTTNSMAPGQYPYPDPYYRSIFAPPPQPYTGVHLQLMGVQQQGVPLPSDAVEEPVFVNAKQYHGILRRRQSRARLESQNKVIKSRKPYLHESRHLHAIRRPRGCGGRFLNAKKEDEHHEDSSHEEKSNLSAGKSAMAASSGTS.

Residues 1-33 form a disordered region; sequence MTSSIHELSDNIGSHEKQEQRDSHFQPPIPSAR. A compositionally biased stretch (basic and acidic residues) spans 7–24; it reads ELSDNIGSHEKQEQRDSH. Residues 103–126 carry the Subunit association domain (SAD) motif; sequence FVNAKQYHGILRRRQSRARLESQN. The segment at residues 133-158 is a DNA-binding region (NFYA/HAP2-type); the sequence is KPYLHESRHLHAIRRPRGCGGRFLNA. The interval 147–190 is disordered; it reads RPRGCGGRFLNAKKEDEHHEDSSHEEKSNLSAGKSAMAASSGTS. A compositionally biased stretch (basic and acidic residues) spans 158–174; the sequence is AKKEDEHHEDSSHEEKS. Low complexity predominate over residues 177-190; the sequence is SAGKSAMAASSGTS.

Belongs to the NFYA/HAP2 subunit family. Heterotrimeric transcription factor composed of three components, NF-YA, NF-YB and NF-YC. NF-YB and NF-YC must interact and dimerize for NF-YA association and DNA binding.

The protein resides in the nucleus. Stimulates the transcription of various genes by recognizing and binding to a CCAAT motif in promoters. This chain is Nuclear transcription factor Y subunit A-7 (NFYA7), found in Arabidopsis thaliana (Mouse-ear cress).